The sequence spans 180 residues: Insertion element IS1296 uncharacterized 21.4 kDa protein (180 aa).

It belongs to the IS150/IS1296 orfA family.

The sequence is that of Insertion element IS1296 uncharacterized 21.4 kDa protein from Mycoplasma mycoides subsp. mycoides SC.